The chain runs to 562 residues: Ribonuclease Y (562 aa).

The helical transmembrane segment at 1–21 (MNMLYFVLALLVGLAGGFFVG) threads the bilayer. The tract at residues 108 to 129 (AAQDAARERETLSADRQETRRE) is disordered. In terms of domain architecture, KH spans 252-312 (SVSVVPIPND…VRREVARHVL (61 aa)). An HD domain is found at 378–471 (VLKHSVQVAH…VAAADAISAA (94 aa)).

The protein belongs to the RNase Y family.

Its subcellular location is the cell membrane. Endoribonuclease that initiates mRNA decay. In Deinococcus geothermalis (strain DSM 11300 / CIP 105573 / AG-3a), this protein is Ribonuclease Y.